The chain runs to 784 residues: Toll-like receptor 2 (784 aa).

A signal peptide spans 1 to 20 (MPHTLWMVWVLGVIISLSKE). Residues 21 to 588 (ESSNQASLSC…RLSVSECHRT (568 aa)) lie on the Extracellular side of the membrane. Cys30 and Cys36 are disulfide-bonded. 19 LRR repeats span residues 54–77 (VKSL…RCVN), 78–101 (LQAL…SLGS), 102–125 (LEHL…PLSS), 126–150 (LTFL…HLTK), 151–175 (LQIL…GLTF), 176–199 (LEEL…SIQN), 200–223 (VSHL…VTSS), 224–250 (VECL…TNSL), 251–278 (IKKF…QISG), 279–308 (LLEL…DPGK), 309–337 (VETL…LTER), 338–361 (VKRI…HLKS), 362–388 (LEYL…AWPS), 389–414 (LQTL…TLKN), 415–437 (LTNI…WPEK), 438–457 (MKYL…CIPK), 458–478 (TLEI…NLPQ), 479–500 (LKEL…LLPM), and 501–524 (LLVL…SFHT). Asn114 carries an N-linked (GlcNAc...) asparagine glycan. N-linked (GlcNAc...) asparagine glycosylation is present at Asn199. Cysteines 353 and 382 form a disulfide. An N-linked (GlcNAc...) asparagine glycan is attached at Asn414. Cys432 and Cys454 are oxidised to a cystine. Asn442 carries N-linked (GlcNAc...) asparagine glycosylation. Residues 525-579 (LKTLEAGGNNFICSCEFLSFTQEQQALAKVLIDWPANYLCDSPSHVRGQQVQDVR) form the LRRCT domain. A helical membrane pass occupies residues 589–609 (ALVSGMCCALFLLILLTGVLC). Residues 610–784 (HRFHGLWYMK…WVNLRAAIKS (175 aa)) are Cytoplasmic-facing. The region spanning 639–782 (ICYDAFVSYS…GFWVNLRAAI (144 aa)) is the TIR domain. Lys754 is covalently cross-linked (Glycyl lysine isopeptide (Lys-Gly) (interchain with G-Cter in ubiquitin)). Positions 761–778 (YLEWPMDEAQREGFWVNL) match the ATG16L1-binding motif motif.

The protein belongs to the Toll-like receptor family. Interacts with LY96, TLR1 and TLR6 (via extracellular domain). TLR2 seems to exist in heterodimers with either TLR1 or TLR6 before stimulation by the ligand. The heterodimers form bigger oligomers in response to their corresponding ligands as well as further heterotypic associations with other receptors such as CD14 and/or CD36. Binds MYD88 (via TIR domain). Interacts with TICAM1. Interacts with CNPY3. Interacts with ATG16L1. Interacts with PPP1R11. Interacts with TICAM2. Interacts with TIRAP. As to quaternary structure, (Microbial infection) Interacts with M.tuberculosis EsxA. In terms of assembly, (Microbial infection) Interacts with M.bovis MPB83. (Microbial infection) Interacts with Staphylococcus aureus protein SSL5. Glycosylation of Asn-442 is critical for secretion of the N-terminal ectodomain of TLR2. Post-translationally, ubiquitinated at Lys-754 by PPP1R11, leading to its degradation. Deubiquitinated by USP2. In terms of tissue distribution, highly expressed in peripheral blood leukocytes, in particular in monocytes, in bone marrow, lymph node and in spleen. Also detected in lung and in fetal liver. Levels are low in other tissues.

Its subcellular location is the membrane. It is found in the cytoplasmic vesicle. It localises to the phagosome membrane. The protein localises to the membrane raft. Functionally, cooperates with LY96 to mediate the innate immune response to bacterial lipoproteins and other microbial cell wall components. Cooperates with TLR1 or TLR6 to mediate the innate immune response to bacterial lipoproteins or lipopeptides. Acts via MYD88 and TRAF6, leading to NF-kappa-B activation, cytokine secretion and the inflammatory response. May also activate immune cells and promote apoptosis in response to the lipid moiety of lipoproteins. Recognizes mycoplasmal macrophage-activating lipopeptide-2kD (MALP-2), soluble tuberculosis factor (STF), phenol-soluble modulin (PSM) and B.burgdorferi outer surface protein A lipoprotein (OspA-L) cooperatively with TLR6. Stimulation of monocytes in vitro with M.tuberculosis PstS1 induces p38 MAPK and ERK1/2 activation primarily via this receptor, but also partially via TLR4. MAPK activation in response to bacterial peptidoglycan also occurs via this receptor. Acts as a receptor for M.tuberculosis lipoproteins LprA, LprG, LpqH and PstS1, some lipoproteins are dependent on other coreceptors (TLR1, CD14 and/or CD36); the lipoproteins act as agonists to modulate antigen presenting cell functions in response to the pathogen. M.tuberculosis HSP70 (dnaK) but not HSP65 (groEL-2) acts via this protein to stimulate NF-kappa-B expression. Recognizes M.tuberculosis major T-antigen EsxA (ESAT-6) which inhibits downstream MYD88-dependent signaling (shown in mouse). Forms activation clusters composed of several receptors depending on the ligand, these clusters trigger signaling from the cell surface and subsequently are targeted to the Golgi in a lipid-raft dependent pathway. Forms the cluster TLR2:TLR6:CD14:CD36 in response to diacylated lipopeptides and TLR2:TLR1:CD14 in response to triacylated lipopeptides. Required for normal uptake of M.tuberculosis, a process that is inhibited by M.tuberculosis LppM. In Homo sapiens (Human), this protein is Toll-like receptor 2.